The following is a 116-amino-acid chain: Protein Rev (116 aa).

2 positions are modified to phosphoserine; by host CK2: Ser-5 and Ser-8. The homomultimerization stretch occupies residues 18–26 (LIKFLYQSN). The disordered stretch occupies residues 23–48 (YQSNPPPSPEGTRQARRNRRRRWRAR). Positions 34-50 (TRQARRNRRRRWRARQR) match the Nuclear localization signal and RNA-binding (RRE) motif. Residues 36–48 (QARRNRRRRWRAR) show a composition bias toward basic residues. Positions 73–84 (LQLPPLERLNLN) match the Nuclear export signal and binding to XPO1 motif. Residues 90–116 (GTSGTQGVGSPQIPVEPPAVLESGTEE) are disordered. Phosphoserine; by host occurs at positions 92 and 99.

It belongs to the HIV-1 REV protein family. In terms of assembly, homomultimer; when bound to the RRE. Multimeric assembly is essential for activity and may involve XPO1. Binds to human KPNB1, XPO1, TNPO1, RANBP5 and IPO7. Interacts with the viral Integrase. Interacts with human KHDRBS1. Interacts with human NAP1; this interaction decreases Rev multimerization and stimulates its activity. Interacts with human DEAD-box helicases DDX3 and DDX24; these interactions may serve for viral RNA export to the cytoplasm and packaging, respectively. Interacts with human PSIP1; this interaction may inhibit HIV-1 DNA integration by promoting dissociation of the Integrase-LEDGF/p75 complex. Post-translationally, asymmetrically arginine dimethylated at one site by host PRMT6. Methylation impairs the RNA-binding activity and export of viral RNA from the nucleus to the cytoplasm. Phosphorylated by protein kinase CK2. Presence of, and maybe binding to the N-terminus of the regulatory beta subunit of CK2 is necessary for CK2-mediated Rev's phosphorylation.

It localises to the host nucleus. It is found in the host nucleolus. The protein localises to the host cytoplasm. Escorts unspliced or incompletely spliced viral pre-mRNAs (late transcripts) out of the nucleus of infected cells. These pre-mRNAs carry a recognition sequence called Rev responsive element (RRE) located in the env gene, that is not present in fully spliced viral mRNAs (early transcripts). This function is essential since most viral proteins are translated from unspliced or partially spliced pre-mRNAs which cannot exit the nucleus by the pathway used by fully processed cellular mRNAs. Rev itself is translated from a fully spliced mRNA that readily exits the nucleus. Rev's nuclear localization signal (NLS) binds directly to KPNB1/Importin beta-1 without previous binding to KPNA1/Importin alpha-1. KPNB1 binds to the GDP bound form of RAN (Ran-GDP) and targets Rev to the nucleus. In the nucleus, the conversion from Ran-GDP to Ran-GTP dissociates Rev from KPNB1 and allows Rev's binding to the RRE in viral pre-mRNAs. Rev multimerization on the RRE via cooperative assembly exposes its nuclear export signal (NES) to the surface. Rev can then form a complex with XPO1/CRM1 and Ran-GTP, leading to nuclear export of the complex. Conversion from Ran-GTP to Ran-GDP mediates dissociation of the Rev/RRE/XPO1/RAN complex, so that Rev can return to the nucleus for a subsequent round of export. Beside KPNB1, also seems to interact with TNPO1/Transportin-1, RANBP5/IPO5 and IPO7/RANBP7 for nuclear import. The nucleoporin-like HRB/RIP is an essential cofactor that probably indirectly interacts with Rev to release HIV RNAs from the perinuclear region to the cytoplasm. The polypeptide is Protein Rev (Homo sapiens (Human)).